Here is a 175-residue protein sequence, read N- to C-terminus: Cyclic pyranopterin monophosphate synthase (175 aa).

Residues 78 to 80 and 125 to 126 each bind substrate; these read LCH and ME. D140 is an active-site residue.

The protein belongs to the MoaC family. As to quaternary structure, homohexamer; trimer of dimers.

It carries out the reaction (8S)-3',8-cyclo-7,8-dihydroguanosine 5'-triphosphate = cyclic pyranopterin phosphate + diphosphate. Its pathway is cofactor biosynthesis; molybdopterin biosynthesis. Catalyzes the conversion of (8S)-3',8-cyclo-7,8-dihydroguanosine 5'-triphosphate to cyclic pyranopterin monophosphate (cPMP). The sequence is that of Cyclic pyranopterin monophosphate synthase from Rhodopirellula baltica (strain DSM 10527 / NCIMB 13988 / SH1).